The chain runs to 776 residues: Venom dipeptidyl peptidase 4 (776 aa).

The first 25 residues, 1–25 (MVPLRSFVLLNSLFLVLLAARTVVT), serve as a signal peptide directing secretion. N-linked (GlcNAc...) asparagine glycosylation is found at Asn44, Asn66, and Asn329. Cystine bridges form between Cys449/Cys452 and Cys462/Cys480. Asn504 and Asn577 each carry an N-linked (GlcNAc...) asparagine glycan. Catalysis depends on Ser638, which acts as the Charge relay system. A disulfide bridge links Cys658 with Cys769. Asn688 and Asn693 each carry an N-linked (GlcNAc...) asparagine glycan. Catalysis depends on charge relay system residues Asp717 and His749.

Belongs to the peptidase S9B family. DPPIV subfamily. In terms of tissue distribution, expressed by the venom gland.

Its subcellular location is the secreted. It catalyses the reaction Release of an N-terminal dipeptide, Xaa-Yaa-|-Zaa-, from a polypeptide, preferentially when Yaa is Pro, provided Zaa is neither Pro nor hydroxyproline.. Its activity is regulated as follows. Inhibited by diprotin A. Venom dipeptidyl-peptidase which removes N-terminal dipeptides sequentially from polypeptides having unsubstituted N-termini provided that the penultimate residue is proline. May process venom proteins into their active forms and/or modulate the chemotactic activity of immune cells after the insect sting. The polypeptide is Venom dipeptidyl peptidase 4 (Vespula vulgaris (Yellow jacket)).